Here is a 563-residue protein sequence, read N- to C-terminus: Methylcrotonoyl-CoA carboxylase beta chain, mitochondrial (563 aa).

A mitochondrion-targeting transit peptide spans 1–22 (MWGALRSVLRPCSRASVPRQRA). Positions 49 to 306 (MKALVNQLHE…QKKLDVTVEP (258 aa)) constitute a CoA carboxyltransferase N-terminal domain. The tract at residues 49-555 (MKALVNQLHE…SAALNAPIQR (507 aa)) is carboxyltransferase. Lys70 is modified (N6-acetyllysine; alternate). Residue Lys70 is modified to N6-succinyllysine; alternate. Residue Lys141 is modified to N6-succinyllysine. A CoA carboxyltransferase C-terminal domain is found at 309 to 555 (EPLFPADELY…SAALNAPIQR (247 aa)). Positions 343 to 372 (RFNEFKALYGDTLVTGFARIFGYPVGIIGN) are acyl-CoA binding. Lys433 is modified (N6-succinyllysine). Lys495 is subject to N6-acetyllysine; alternate. Lys495 carries the N6-succinyllysine; alternate modification. Lys511 is subject to N6-acetyllysine.

Belongs to the AccD/PCCB family. In terms of assembly, probably a dodecamer composed of six biotin-containing alpha subunits (MCCC1) and six beta (MCCC2) subunits.

The protein localises to the mitochondrion matrix. It carries out the reaction 3-methylbut-2-enoyl-CoA + hydrogencarbonate + ATP = 3-methyl-(2E)-glutaconyl-CoA + ADP + phosphate + H(+). The protein operates within amino-acid degradation; L-leucine degradation; (S)-3-hydroxy-3-methylglutaryl-CoA from 3-isovaleryl-CoA: step 2/3. Carboxyltransferase subunit of the 3-methylcrotonyl-CoA carboxylase, an enzyme that catalyzes the conversion of 3-methylcrotonyl-CoA to 3-methylglutaconyl-CoA, a critical step for leucine and isovaleric acid catabolism. The chain is Methylcrotonoyl-CoA carboxylase beta chain, mitochondrial (Mccc2) from Rattus norvegicus (Rat).